Reading from the N-terminus, the 460-residue chain is Bifunctional protein GlmU (460 aa).

Residues 1–228 (MKNYALVLAA…NSLAMGVNDL (228 aa)) are pyrophosphorylase. Residues 8 to 11 (LAAG), lysine 22, glutamine 72, and 77 to 78 (GT) each bind UDP-N-acetyl-alpha-D-glucosamine. A Mg(2+)-binding site is contributed by aspartate 102. UDP-N-acetyl-alpha-D-glucosamine is bound by residues glycine 139, glutamate 154, asparagine 169, and asparagine 226. Asparagine 226 is a Mg(2+) binding site. Residues 229-249 (YAISKAEKYLREYINKDHMLN) are linker. The interval 250–460 (GVSMINPETI…LISPKPKKEE (211 aa)) is N-acetyltransferase. Residues arginine 331 and lysine 349 each coordinate UDP-N-acetyl-alpha-D-glucosamine. Histidine 361 (proton acceptor) is an active-site residue. Tyrosine 364 and asparagine 375 together coordinate UDP-N-acetyl-alpha-D-glucosamine. Acetyl-CoA is bound by residues 384–385 (NY), alanine 421, and arginine 438.

The protein in the N-terminal section; belongs to the N-acetylglucosamine-1-phosphate uridyltransferase family. This sequence in the C-terminal section; belongs to the transferase hexapeptide repeat family. As to quaternary structure, homotrimer. It depends on Mg(2+) as a cofactor.

The protein resides in the cytoplasm. It carries out the reaction alpha-D-glucosamine 1-phosphate + acetyl-CoA = N-acetyl-alpha-D-glucosamine 1-phosphate + CoA + H(+). The catalysed reaction is N-acetyl-alpha-D-glucosamine 1-phosphate + UTP + H(+) = UDP-N-acetyl-alpha-D-glucosamine + diphosphate. It functions in the pathway nucleotide-sugar biosynthesis; UDP-N-acetyl-alpha-D-glucosamine biosynthesis; N-acetyl-alpha-D-glucosamine 1-phosphate from alpha-D-glucosamine 6-phosphate (route II): step 2/2. The protein operates within nucleotide-sugar biosynthesis; UDP-N-acetyl-alpha-D-glucosamine biosynthesis; UDP-N-acetyl-alpha-D-glucosamine from N-acetyl-alpha-D-glucosamine 1-phosphate: step 1/1. It participates in bacterial outer membrane biogenesis; LPS lipid A biosynthesis. Functionally, catalyzes the last two sequential reactions in the de novo biosynthetic pathway for UDP-N-acetylglucosamine (UDP-GlcNAc). The C-terminal domain catalyzes the transfer of acetyl group from acetyl coenzyme A to glucosamine-1-phosphate (GlcN-1-P) to produce N-acetylglucosamine-1-phosphate (GlcNAc-1-P), which is converted into UDP-GlcNAc by the transfer of uridine 5-monophosphate (from uridine 5-triphosphate), a reaction catalyzed by the N-terminal domain. The chain is Bifunctional protein GlmU from Acholeplasma laidlawii (strain PG-8A).